Here is a 215-residue protein sequence, read N- to C-terminus: 3-isopropylmalate dehydratase small subunit (215 aa).

The protein belongs to the LeuD family. LeuD type 1 subfamily. In terms of assembly, heterodimer of LeuC and LeuD.

It carries out the reaction (2R,3S)-3-isopropylmalate = (2S)-2-isopropylmalate. It functions in the pathway amino-acid biosynthesis; L-leucine biosynthesis; L-leucine from 3-methyl-2-oxobutanoate: step 2/4. Catalyzes the isomerization between 2-isopropylmalate and 3-isopropylmalate, via the formation of 2-isopropylmaleate. The protein is 3-isopropylmalate dehydratase small subunit of Leptothrix cholodnii (strain ATCC 51168 / LMG 8142 / SP-6) (Leptothrix discophora (strain SP-6)).